A 522-amino-acid chain; its full sequence is 4-chlorobenzoate--CoA ligase (522 aa).

ATP-binding positions include 161 to 169, 300 to 305, and N410; these read TSGTTGLPK and DIYGTT.

The protein belongs to the ATP-dependent AMP-binding enzyme family. Homodimer. Mg(2+) serves as cofactor.

It carries out the reaction 4-chlorobenzoate + ATP + CoA = 4-chlorobenzoyl-CoA + AMP + diphosphate. It functions in the pathway xenobiotic degradation; 4-chlorobenzoate degradation; 4-hydroxybenzoate from 4-chlorobenzoate: step 2/3. Catalyzes the formation of chlorobenzoyl-CoA via a 2 step reaction. First 4-chlorobenzoate is adenylated by ATP, followed by acyl transfer from the 4-chlorobenzoyl-AMP intermediate to CoA. Benzoate, 4-bromobenzoate, 4-iodobenzoate and 4-fluorobenzoate also act as substrates. Inactive towards 4-nitrobenzoate. The protein is 4-chlorobenzoate--CoA ligase of Arthrobacter sp.